The primary structure comprises 315 residues: Calumenin (315 aa).

Positions 1–19 (MNKRPLLLCLGLWVACTLS) are cleaved as a signal peptide. EF-hand domains are found at residues 68–103 (ESKE…AQKK), 104–139 (YVYD…TYLD), 151–186 (QMMI…EEFD), 188–223 (MKDI…HDGD), 229–264 (WVKT…SDYD), and 265–300 (HSEA…FVGS). Residues aspartate 81, aspartate 83, aspartate 85, tyrosine 87, glutamate 92, aspartate 117, serine 119, aspartate 121, and glutamate 128 each coordinate Ca(2+). N-linked (GlcNAc...) asparagine glycosylation is present at asparagine 131. The Ca(2+) site is built by aspartate 164, aspartate 166, aspartate 168, glutamate 175, aspartate 201, asparagine 203, aspartate 205, glutamate 212, aspartate 242, asparagine 244, aspartate 246, lysine 248, glutamate 253, aspartate 278, asparagine 280, aspartate 282, lysine 284, and glutamate 289. The short motif at 312-315 (HDEF) is the Prevents secretion from ER element.

The protein belongs to the CREC family. In terms of assembly, interacts with ggcx.

It is found in the endoplasmic reticulum membrane. The protein resides in the golgi apparatus. It localises to the secreted. The protein localises to the melanosome. Its subcellular location is the sarcoplasmic reticulum lumen. Involved in regulation of vitamin K-dependent carboxylation of multiple N-terminal glutamate residues. Seems to inhibit gamma-carboxylase ggcx. Binds 7 calcium ions with a low affinity. The polypeptide is Calumenin (calu) (Xenopus laevis (African clawed frog)).